We begin with the raw amino-acid sequence, 368 residues long: MTTKQICFADRCFNFAFGEHVLESVESYIPRDEFDQYIMISDSGVPDSIVHYAAEYFGKLAPVHILRFQGGEEYKTLSTVTNLQERAIALGANRRTAIVAVGGGLTGNVAGVAAGMMFRGIALIHVPTTFLAASDSVLSIKQAVNLTSGKNLVGFYYPPRFVFADTRILSESPPRQVKAGMCELVKNMLILENDNKEFTEDDLNSANVYSPKQLETFINFCISAKMSVLSEDIYEKKKGLIFEYGHTIGHAIELAEQGGITHGEAIAVGMIYAAKIANRMNLMPEHDVSAHYWLLNKIGALQDIPLKSDPDSIFHYLIHDNKRGYIKLDEDNLGMILLSGVGKPAMYNQTLLTPVRKTLIKEVIREGL.

Residues D42, 72–75, 104–108, 128–129, 139–141, 150–151, and Q176 each bind NAD(+); these read EEYK, GLTGN, TT, SIK, and KN. The active site involves K141. E183 serves as a coordination point for Co(2+). Residue E243 is part of the active site. Positions 246 and 262 each coordinate Co(2+).

The protein belongs to the sugar phosphate cyclases superfamily. DOI synthase family. As to quaternary structure, was isolated as a heterodimeric enzyme comprising of BtrC and a smaller polypeptide further identified as PdxT by sequence homology. Homodimer in solution. The cofactor is NAD(+). It depends on Co(2+) as a cofactor.

The enzyme catalyses D-glucose 6-phosphate = 2-deoxy-L-scyllo-inosose + phosphate. The protein operates within metabolic intermediate biosynthesis; 2-deoxystreptamine biosynthesis; 2-deoxystreptamine from D-glucose 6-phosphate: step 1/4. It participates in antibiotic biosynthesis; butirosin biosynthesis. Its activity is regulated as follows. Strongly inhibited by EDTA, zinc and Cu(2+). Catalyzes the intramolecular carbocycle formation from D-glucose-6-phosphate to 2-deoxy-scyllo-inosose (DOI). The sequence is that of 2-deoxy-scyllo-inosose synthase (btrC) from Niallia circulans (Bacillus circulans).